Consider the following 440-residue polypeptide: Xylose isomerase (440 aa).

Residues His101 and Asp104 contribute to the active site. Glu232, Glu268, His271, Asp296, Asp307, Asp309, and Asp339 together coordinate Mg(2+).

The protein belongs to the xylose isomerase family. In terms of assembly, homotetramer. It depends on Mg(2+) as a cofactor.

It localises to the cytoplasm. It carries out the reaction alpha-D-xylose = alpha-D-xylulofuranose. In Escherichia coli O17:K52:H18 (strain UMN026 / ExPEC), this protein is Xylose isomerase.